Reading from the N-terminus, the 84-residue chain is MVIIRLARGGSKKRPFYNIVATDSRNRRDGRFIERVGFYNPVATKGESLRIAQDRLTYWQGVGAQLSPTVQRLVKEAQKAQPAA.

The protein belongs to the bacterial ribosomal protein bS16 family.

The chain is Small ribosomal subunit protein bS16 from Burkholderia ambifaria (strain MC40-6).